The following is a 914-amino-acid chain: Penicillin-binding protein 1A/1B (914 aa).

Residues 1 to 29 (MSDQFNSREARRKANSKSSPSPKKGKKRK) form a disordered region. Over 1–37 (MSDQFNSREARRKANSKSSPSPKKGKKRKKGGLFKKT) the chain is Cytoplasmic. A helical; Signal-anchor for type II membrane protein membrane pass occupies residues 38 to 58 (LFTLLILFVLGVVGGAVTFAV). The Extracellular segment spans residues 59-914 (MVSDAPSLDE…TNSSSIEKTN (856 aa)). The transglycosylase stretch occupies residues 77-246 (STIYDKNGKE…TAYNPVKNPD (170 aa)). The Proton donor; for transglycosylase activity role is filled by Glu-115. The segment at 329 to 662 (TKAQDKLDEL…PDSVVEATVE (334 aa)) is transpeptidase. The active-site Acyl-ester intermediate; for transpeptidase activity is Ser-390. The Fibronectin type-III domain maps to 708 to 795 (KLSGLNVKYD…SYEVPKAEDD (88 aa)). The segment at 773–914 (TAVSDDGKST…TNSSSIEKTN (142 aa)) is disordered. Residues 798–828 (KKDQQQTDDEKQDDEKTQDDTQTDDSQKDDG) are compositionally biased toward basic and acidic residues. The span at 829–840 (QTDQDQTDDSTN) shows a compositional bias: acidic residues. Composition is skewed to low complexity over residues 848–892 (NTNT…GSDT) and 900–914 (SNKT…EKTN).

In the N-terminal section; belongs to the glycosyltransferase 51 family. This sequence in the C-terminal section; belongs to the transpeptidase family. The product expressed from the translation of the ponA gene appears as two bands on a gel (1A and 1B), but the specific amino acid sequence of each protein is unknown. In terms of processing, the N-terminus is blocked.

It localises to the cell membrane. The protein localises to the forespore inner membrane. It catalyses the reaction [GlcNAc-(1-&gt;4)-Mur2Ac(oyl-L-Ala-gamma-D-Glu-L-Lys-D-Ala-D-Ala)](n)-di-trans,octa-cis-undecaprenyl diphosphate + beta-D-GlcNAc-(1-&gt;4)-Mur2Ac(oyl-L-Ala-gamma-D-Glu-L-Lys-D-Ala-D-Ala)-di-trans,octa-cis-undecaprenyl diphosphate = [GlcNAc-(1-&gt;4)-Mur2Ac(oyl-L-Ala-gamma-D-Glu-L-Lys-D-Ala-D-Ala)](n+1)-di-trans,octa-cis-undecaprenyl diphosphate + di-trans,octa-cis-undecaprenyl diphosphate + H(+). The enzyme catalyses Preferential cleavage: (Ac)2-L-Lys-D-Ala-|-D-Ala. Also transpeptidation of peptidyl-alanyl moieties that are N-acyl substituents of D-alanine.. It functions in the pathway cell wall biogenesis; peptidoglycan biosynthesis. Its function is as follows. Cell wall formation. Synthesis of cross-linked peptidoglycan from the lipid intermediates. The enzyme has a penicillin-insensitive transglycosylase N-terminal domain (formation of linear glycan strands) and a penicillin-sensitive transpeptidase C-terminal domain (cross-linking of the peptide subunits). Required for vegetative growth. Has a partially redundant function with PBP-2A (pbpA) during spore outgrowth. This Bacillus subtilis (strain 168) protein is Penicillin-binding protein 1A/1B (ponA).